A 199-amino-acid chain; its full sequence is Protein GrpE (199 aa).

Basic and acidic residues predominate over residues 1 to 24 (MSKQNKKDWKKFKDEHKEEHKVEN). Positions 1-52 (MSKQNKKDWKKFKDEHKEEHKVENEILEEETDEESQHQEPALGHPSYTALEE) are disordered.

It belongs to the GrpE family. In terms of assembly, homodimer.

It is found in the cytoplasm. Functionally, participates actively in the response to hyperosmotic and heat shock by preventing the aggregation of stress-denatured proteins, in association with DnaK and GrpE. It is the nucleotide exchange factor for DnaK and may function as a thermosensor. Unfolded proteins bind initially to DnaJ; upon interaction with the DnaJ-bound protein, DnaK hydrolyzes its bound ATP, resulting in the formation of a stable complex. GrpE releases ADP from DnaK; ATP binding to DnaK triggers the release of the substrate protein, thus completing the reaction cycle. Several rounds of ATP-dependent interactions between DnaJ, DnaK and GrpE are required for fully efficient folding. This is Protein GrpE from Legionella pneumophila.